The chain runs to 280 residues: Probable ketoamine kinase lp_1983 (280 aa).

87–89 (DWL) is an ATP binding site. The Proton acceptor role is filled by D189.

The protein belongs to the fructosamine kinase family.

The enzyme catalyses N(6)-(D-ribulosyl)-L-lysine + ATP = N(6)-(3-O-phospho-D-ribulosyl)-L-lysine + ADP + H(+). It carries out the reaction N-(D-ribulosyl)-cadaverine + ATP = N-(3-O-phospho-D-ribulosyl)-cadaverine + ADP + H(+). It catalyses the reaction N(6)-(D-erythrulosyl)-L-lysine + ATP = N(6)-(3-O-phospho-D-erythrulosyl)-L-lysine + ADP + H(+). The catalysed reaction is N-(D-erythrulosyl)-cadaverine + ATP = N-(3-O-phospho-D-erythrulosyl)-cadaverine + ADP + H(+). The enzyme catalyses N(6)-D-ribulosyl-L-lysyl-[protein] + ATP = N(6)-(3-O-phospho-D-ribulosyl)-L-lysyl-[protein] + ADP + H(+). It carries out the reaction N(6)-(D-erythrulosyl)-L-lysyl-[protein] + ATP = N(6)-(3-O-phospho-D-erythrulosyl)-L-lysyl-[protein] + ADP + H(+). Its function is as follows. Ketoamine kinase that phosphorylates ketoamines, such as erythruloselysine, erythrulosecadaverine, ribuloselysine and ribulosecadaverine, on the third carbon of the sugar moiety to generate ketoamine 3-phosphate. Has higher activity on free lysine (erythruloselysine and ribuloselysine), than on ribuloselysine and erythruloselysine residues on glycated proteins. This Lactiplantibacillus plantarum (strain ATCC BAA-793 / NCIMB 8826 / WCFS1) (Lactobacillus plantarum) protein is Probable ketoamine kinase lp_1983.